Here is a 241-residue protein sequence, read N- to C-terminus: Glutathione S-transferase omega-1 (241 aa).

Ser2 carries the post-translational modification N-acetylserine. The 80-residue stretch at 22–101 folds into the GST N-terminal domain; that stretch reads GQIRVYSMRF…YLDEAYPEKK (80 aa). Cys32 serves as the catalytic Nucleophile. The residue at position 57 (Lys57) is an N6-acetyllysine. Glutathione is bound by residues Lys59, Val72, and 85–86; that span reads ES. Residues 106–228 enclose the GST C-terminal domain; sequence DPYEKACQKM…AKTYRDYLSL (123 aa). Ser129 is modified (phosphoserine). An N6-acetyllysine mark is found at Lys143, Lys148, and Lys152.

Belongs to the GST superfamily. Omega family. Homodimer.

It localises to the cytoplasm. It is found in the cytosol. The catalysed reaction is RX + glutathione = an S-substituted glutathione + a halide anion + H(+). It carries out the reaction L-dehydroascorbate + 2 glutathione = glutathione disulfide + L-ascorbate. It catalyses the reaction methylarsonate + 2 glutathione + H(+) = methylarsonous acid + glutathione disulfide + H2O. Its function is as follows. Exhibits glutathione-dependent thiol transferase and dehydroascorbate reductase activities. Has S-(phenacyl)glutathione reductase activity. Also has glutathione S-transferase activity. Participates in the biotransformation of inorganic arsenic and reduces monomethylarsonic acid (MMA) and dimethylarsonic acid. This chain is Glutathione S-transferase omega-1 (Gsto1), found in Rattus norvegicus (Rat).